The primary structure comprises 420 residues: MDVLSVSEINAQIKALLEATFLQVRVQGEVSNLTIHKVSGHAYFSLKDSQSVIKCVLFKGNANRLKFALKEGQEVVVFGGISVYVPRGDYQINCFEIEPKDIGSLTLALEQLKEKLRLKGYFDEENKLPKPHFPKRVAVITSQNSAAWADMKKIASKRWPMCELVCINTLMQGEGCVQSVVESIVYADSFHDTKNAFDAIVVARGGGSMEDLYSFNDEKIADALYLAKTFSMSAIGHESDFLLSDLVADLRASTPSNAMEILLPSSDEWLQRLDGFNVKLHRSFKTLLHQKKAHLEHLVASLKRLSFENKHHLNALKLEKLKIALENKTLEFLRFKKTLLEKISTQTLTSPFLQTKTERLNRLENALKLAHANLKLPQFGALVSKNNQAIELEALKRGDKIELSNEKTRASAEILSVDRV.

This sequence belongs to the XseA family. Heterooligomer composed of large and small subunits.

Its subcellular location is the cytoplasm. The catalysed reaction is Exonucleolytic cleavage in either 5'- to 3'- or 3'- to 5'-direction to yield nucleoside 5'-phosphates.. Its function is as follows. Bidirectionally degrades single-stranded DNA into large acid-insoluble oligonucleotides, which are then degraded further into small acid-soluble oligonucleotides. The polypeptide is Exodeoxyribonuclease 7 large subunit (Helicobacter pylori (strain ATCC 700392 / 26695) (Campylobacter pylori)).